The chain runs to 699 residues: Elongation factor G (699 aa).

Positions 8–290 (NRYRNIGICA…AVIEFLPAPD (283 aa)) constitute a tr-type G domain. Residues 17–24 (AHVDAGKT), 88–92 (DTPGH), and 142–145 (NKMD) each bind GTP.

It belongs to the TRAFAC class translation factor GTPase superfamily. Classic translation factor GTPase family. EF-G/EF-2 subfamily.

It is found in the cytoplasm. In terms of biological role, catalyzes the GTP-dependent ribosomal translocation step during translation elongation. During this step, the ribosome changes from the pre-translocational (PRE) to the post-translocational (POST) state as the newly formed A-site-bound peptidyl-tRNA and P-site-bound deacylated tRNA move to the P and E sites, respectively. Catalyzes the coordinated movement of the two tRNA molecules, the mRNA and conformational changes in the ribosome. This is Elongation factor G from Alcanivorax borkumensis (strain ATCC 700651 / DSM 11573 / NCIMB 13689 / SK2).